We begin with the raw amino-acid sequence, 475 residues long: Methylenetetrahydrofolate--tRNA-(uracil-5-)-methyltransferase TrmFO (475 aa).

13 to 18 lines the FAD pocket; sequence GAGLAG.

This sequence belongs to the MnmG family. TrmFO subfamily. FAD serves as cofactor.

It is found in the cytoplasm. It catalyses the reaction uridine(54) in tRNA + (6R)-5,10-methylene-5,6,7,8-tetrahydrofolate + NADH + H(+) = 5-methyluridine(54) in tRNA + (6S)-5,6,7,8-tetrahydrofolate + NAD(+). It carries out the reaction uridine(54) in tRNA + (6R)-5,10-methylene-5,6,7,8-tetrahydrofolate + NADPH + H(+) = 5-methyluridine(54) in tRNA + (6S)-5,6,7,8-tetrahydrofolate + NADP(+). Catalyzes the folate-dependent formation of 5-methyl-uridine at position 54 (M-5-U54) in all tRNAs. The protein is Methylenetetrahydrofolate--tRNA-(uracil-5-)-methyltransferase TrmFO of Bradyrhizobium diazoefficiens (strain JCM 10833 / BCRC 13528 / IAM 13628 / NBRC 14792 / USDA 110).